A 239-amino-acid polypeptide reads, in one-letter code: Small ribosomal subunit protein uS3c (239 aa).

The region spanning 43 to 139 is the KH type-2 domain; sequence IKNYIQKNRK…RFNISIEKVK (97 aa). Residues 50–74 are disordered; the sequence is NRKKGSNRKIESDSSSEVITHNRKM.

It belongs to the universal ribosomal protein uS3 family. In terms of assembly, part of the 30S ribosomal subunit.

The protein resides in the plastid. Its subcellular location is the chloroplast. This Hordeum vulgare (Barley) protein is Small ribosomal subunit protein uS3c (rps3).